The chain runs to 658 residues: MFRKTLNSISRRHFSSSSPESPSLYSFLKPSLFSHKPITLSPSLSPPQNPKTLTPDQKSSFESTLHDSLNAHYTDEAWKAFRSLTAASSLPEKRLINSLITHLSGVEGSGESISHRLKRAFASAAYVIEKDPILLEFETVRTLLESMKLAKAAGPALALVKCMFKNRYFVPFDLWGHLVIDICRENGSLAPFLKVFKESCRISVDEKLEFMKPDLVASNAALEACCRQMESLADAENVIESMAVLGVKPDELSFGFLAYLYARKGLREKISELENLMDGFGFASRRILYSNMISGYVKSGDLDSVSDVILHSLKEGGEESSFSVETYCELVKGFIESKSVKSLAKVILEAQKLESSYVGVDSSVGFGIINACVNLGFSDKAHSILEEMIAQGGGSVGIGVYVPILKAYCKEYRTAEATQLVTEISSSGLQLDVEISNALIEASMTNQDFISAFTLFRDMRENRVVDLKGSYLTIMTGLLENQRPELMAAFLDEVVEDPRVEVNSHDWNSIIHAFCKSGRLEDARRTFRRMVFLRYEPNNQTYLSLINGYVSGEKYFNVLLLWNEIKGKISSVEAEKRSRLDHALVDAFLYALVKGGFFDAAMQVVEKSQEMKIFVDKWRYKQAFMETHKKLRLPKLRKRNYKKMESLVAFKNWAGLNT.

2 disordered regions span residues 1-23 (MFRK…ESPS) and 39-61 (TLSP…KSSF). Residues 50-61 (PKTLTPDQKSSF) are compositionally biased toward polar residues. PPR repeat units lie at residues 214-249 (DLVA…GVKP), 250-284 (DELS…GFAS), 285-320 (RRIL…GEES), 323-353 (SVET…AQKL), 361-395 (DSSV…GGGS), 397-431 (GIGV…GLQL), 432-466 (DVEI…RVVD), 467-497 (LKGS…VVED), 503-537 (NSHD…RYEP), 538-568 (NNQT…IKGK), and 581-615 (DHAL…KIFV).

This sequence belongs to the PPR family. P subfamily.

The protein is Pentatricopeptide repeat-containing protein At1g69290 of Arabidopsis thaliana (Mouse-ear cress).